Here is a 101-residue protein sequence, read N- to C-terminus: MAKKSSVAREAKRRRLVEANFKKRSDLRKIVKSLSVSEEEKENARISLNKMKRDTSPTRLHNRCLLTGRPRGYLRKFAISRICFRQMASMGEIPGVIKASW.

The protein belongs to the universal ribosomal protein uS14 family. As to quaternary structure, part of the 30S ribosomal subunit. Contacts proteins S3 and S10.

Functionally, binds 16S rRNA, required for the assembly of 30S particles and may also be responsible for determining the conformation of the 16S rRNA at the A site. This Chlamydia pneumoniae (Chlamydophila pneumoniae) protein is Small ribosomal subunit protein uS14.